The following is a 293-amino-acid chain: Fructose-bisphosphate aldolase class 1 (293 aa).

Catalysis depends on Glu-176, which acts as the Proton acceptor. The active-site Schiff-base intermediate with dihydroxyacetone-P is the Lys-211.

It belongs to the class I fructose-bisphosphate aldolase family.

It carries out the reaction beta-D-fructose 1,6-bisphosphate = D-glyceraldehyde 3-phosphate + dihydroxyacetone phosphate. The protein operates within carbohydrate degradation; glycolysis; D-glyceraldehyde 3-phosphate and glycerone phosphate from D-glucose: step 4/4. In Porphyromonas gingivalis (strain ATCC 33277 / DSM 20709 / CIP 103683 / JCM 12257 / NCTC 11834 / 2561), this protein is Fructose-bisphosphate aldolase class 1.